The chain runs to 83 residues: Cytochrome b559 subunit alpha (83 aa).

A helical membrane pass occupies residues 21-35 (VIHSITIPSLFIAGW). Heme is bound at residue His23.

Belongs to the PsbE/PsbF family. In terms of assembly, heterodimer of an alpha subunit and a beta subunit. PSII is composed of 1 copy each of membrane proteins PsbA, PsbB, PsbC, PsbD, PsbE, PsbF, PsbH, PsbI, PsbJ, PsbK, PsbL, PsbM, PsbT, PsbX, PsbY, PsbZ, Psb30/Ycf12, at least 3 peripheral proteins of the oxygen-evolving complex and a large number of cofactors. It forms dimeric complexes. Requires heme b as cofactor.

The protein resides in the plastid. It is found in the chloroplast thylakoid membrane. Its function is as follows. This b-type cytochrome is tightly associated with the reaction center of photosystem II (PSII). PSII is a light-driven water:plastoquinone oxidoreductase that uses light energy to abstract electrons from H(2)O, generating O(2) and a proton gradient subsequently used for ATP formation. It consists of a core antenna complex that captures photons, and an electron transfer chain that converts photonic excitation into a charge separation. This Chlorella vulgaris (Green alga) protein is Cytochrome b559 subunit alpha.